Here is a 78-residue protein sequence, read N- to C-terminus: D-alanyl carrier protein (78 aa).

In terms of domain architecture, Carrier spans 1–78 (MAFRENVLEI…MIITQLEALK (78 aa)). Residue Ser36 is modified to O-(pantetheine 4'-phosphoryl)serine.

It belongs to the DltC family. In terms of processing, 4'-phosphopantetheine is transferred from CoA to a specific serine of apo-DCP.

The protein resides in the cytoplasm. Its pathway is cell wall biogenesis; lipoteichoic acid biosynthesis. Carrier protein involved in the D-alanylation of lipoteichoic acid (LTA). The loading of thioester-linked D-alanine onto DltC is catalyzed by D-alanine--D-alanyl carrier protein ligase DltA. The DltC-carried D-alanyl group is further transferred to cell membrane phosphatidylglycerol (PG) by forming an ester bond, probably catalyzed by DltD. D-alanylation of LTA plays an important role in modulating the properties of the cell wall in Gram-positive bacteria, influencing the net charge of the cell wall. This chain is D-alanyl carrier protein, found in Listeria innocua serovar 6a (strain ATCC BAA-680 / CLIP 11262).